The primary structure comprises 664 residues: Phosphomethylpyrimidine synthase (664 aa).

Residues asparagine 235, methionine 264, tyrosine 293, histidine 329, 349–351 (SRG), 390–393 (DGMR), and glutamate 429 contribute to the substrate site. Histidine 433 contributes to the Zn(2+) binding site. Tyrosine 456 contacts substrate. Histidine 497 contacts Zn(2+). The [4Fe-4S] cluster site is built by cysteine 577, cysteine 580, and cysteine 585.

This sequence belongs to the ThiC family. As to quaternary structure, homodimer. The cofactor is [4Fe-4S] cluster.

The enzyme catalyses 5-amino-1-(5-phospho-beta-D-ribosyl)imidazole + S-adenosyl-L-methionine = 4-amino-2-methyl-5-(phosphooxymethyl)pyrimidine + CO + 5'-deoxyadenosine + formate + L-methionine + 3 H(+). It functions in the pathway cofactor biosynthesis; thiamine diphosphate biosynthesis. Functionally, catalyzes the synthesis of the hydroxymethylpyrimidine phosphate (HMP-P) moiety of thiamine from aminoimidazole ribotide (AIR) in a radical S-adenosyl-L-methionine (SAM)-dependent reaction. This is Phosphomethylpyrimidine synthase from Shewanella amazonensis (strain ATCC BAA-1098 / SB2B).